An 87-amino-acid chain; its full sequence is Alpha-elapitoxin-Ls2a (87 aa).

An N-terminal signal peptide occupies residues 1–21; sequence MKTLLLTLVVVTIVCLDLGYT. Intrachain disulfides connect Cys24–Cys41, Cys34–Cys62, Cys47–Cys51, Cys66–Cys77, and Cys78–Cys83.

This sequence belongs to the three-finger toxin family. Long-chain subfamily. Type II alpha-neurotoxin sub-subfamily. In terms of tissue distribution, expressed by the venom gland.

Its subcellular location is the secreted. Its function is as follows. Binds with high affinity to muscular (tested on Torpedo marmorata, Kd=1.6 nM) and neuronal (chimeric alpha-7/CHRNA7, Kd=3 nM) nicotinic acetylcholine receptor (nAChR) and inhibits acetylcholine from binding to the receptor, thereby impairing neuromuscular and neuronal transmission. Also shows a very weak inhibition on GABA(A) receptors. The toxin (10 uM) inhibits 83% of current in channels composed of alpha-1-beta-3-gamma-2 (GABRA1-GABRB3-GABRG2) subunits, 39% of current in channels composed of alpha-2-beta-2-gamma-2 (GABRA2-GABRB2-GABRG2) subunits, and 33% of current in channels composed of alpha-5-beta-2-gamma-2 (GABRA5-GABRB2-GABRG2) subunits. This chain is Alpha-elapitoxin-Ls2a, found in Laticauda semifasciata (Black-banded sea krait).